Consider the following 610-residue polypeptide: MGLKAAQKTLFPLRSIDDVVRLFAAELGREEPDLVLLSLVLGFVEHFLAVNRVIPTNVPELTFQPSPAPDPPGGLTYFPVADLSIIAALYARFTAQIRGAVDLSLYPREGGVSSRELVKKVSDVIWNSLSRSYFKDRAHIQSLFSFITGTKLDSSGVAFAVVGACQALGLRDVHLALSEDHAWVVFGPNGEQTAEVTWHGKGNEDRRGQTVNAGVAERSWLYLKGSYMRCDRKMEVAFMVCAINPSIDLHTDSLELLQLQQKLLWLLYDLGHLERYPMALGNLADLEELEPTPGRPDPLTLYHKGIASAKTYYRDEHIYPYMYLAGYHCRNRNVREALQAWADTATVIQDYNYCREDEEIYKEFFEVANDVIPNLLKEAASLLEAGEERPGEQTQGTQSQGSALQDPECFAHLLRFYDGICKWEEGSPTPVLHVGWATFLVQSLGRFEGQVRQKVRIVSREAEAAEAEEPWGEEAREGRRRGPRRESKPEEPPPPKKPALDKGPGAGQGAVPGPPRKPPGTVPGTARGAEGGSAAPVPAPAASPPPEGPVLTFQSEKMKGMKELLVATKINSSAIKLQLTAQSQVQMKKQKVSTPSDYTLSFLKRQRKGL.

Positions 214–390 (GVAERSWLYL…SLLEAGEERP (177 aa)) are interaction with FANCD2. Disordered stretches follow at residues 385-404 (AGEERPGEQTQGTQSQGSAL) and 460-552 (REAE…PVLT). Over residues 393–402 (QTQGTQSQGS) the composition is skewed to low complexity. The span at 484–500 (RRESKPEEPPPPKKPAL) shows a compositional bias: basic and acidic residues. Residue S487 is modified to Phosphoserine. Composition is skewed to pro residues over residues 512 to 521 (PGPPRKPPGT) and 537 to 548 (VPAPAASPPPEG). S543 is modified (phosphoserine). T594 is subject to Phosphothreonine.

Component of the MLL-HCF complex, at least composed of KMT2A/MLL1, MEN1, ASH2L, RBBP5, DPY30, WDR5, HCFC1 and HCFC2. Component of the menin-associated histone methyltransferase complex, at least composed of KMT2B/MLL4, MEN1, ASH2L, RBBP5, DPY30 and WDR5. Interacts with POLR2B. Interacts with POLR2A phosphorylated at 'Ser-5', but not with the unphosphorylated, nor 'Ser-2' phosphorylated POLR2A forms. Interacts with FANCD2 and DBF4. Interacts with SMAD3, but not with SMAD2, nor SMAD4. Directly interacts with NFKB1, NFKB2 and RELA. Interacts with JUND (via MBM motif); inhibits the interaction of JUND with MAPK10 and the phosphorylation of JUND by MAP kinases MAPK8 and MAPK10. Interacts with KMT2A (via MBM motif). The KMT2A-MEN1 complex interacts with PSIP1 with a greater affinity as MEN1 enhances interaction of KMT2A with PSIP1.

It is found in the nucleus. Functionally, essential component of a MLL/SET1 histone methyltransferase (HMT) complex, a complex that specifically methylates 'Lys-4' of histone H3 (H3K4). Functions as a transcriptional regulator. Binds to the TERT promoter and represses telomerase expression. Plays a role in TGFB1-mediated inhibition of cell-proliferation, possibly regulating SMAD3 transcriptional activity. Represses JUND-mediated transcriptional activation on AP1 sites, as well as that mediated by NFKB subunit RELA. Positively regulates HOXC8 and HOXC6 gene expression. May be involved in normal hematopoiesis through the activation of HOXA9 expression. May be involved in DNA repair. This is Menin (MEN1) from Bos taurus (Bovine).